We begin with the raw amino-acid sequence, 381 residues long: Homoserine O-acetyltransferase (381 aa).

The AB hydrolase-1 domain maps to 47-359 (NAILICHALT…DKGHDAFLLD (313 aa)). Serine 153 (nucleophile) is an active-site residue. Residue arginine 223 participates in substrate binding. Residues aspartate 320 and histidine 353 contribute to the active site. Aspartate 354 contributes to the substrate binding site.

The protein belongs to the AB hydrolase superfamily. MetX family. As to quaternary structure, homodimer.

It localises to the cytoplasm. The catalysed reaction is L-homoserine + acetyl-CoA = O-acetyl-L-homoserine + CoA. The protein operates within amino-acid biosynthesis; L-methionine biosynthesis via de novo pathway; O-acetyl-L-homoserine from L-homoserine: step 1/1. Functionally, transfers an acetyl group from acetyl-CoA to L-homoserine, forming acetyl-L-homoserine. The polypeptide is Homoserine O-acetyltransferase (Acidiphilium cryptum (strain JF-5)).